A 582-amino-acid polypeptide reads, in one-letter code: NudC domain-containing protein 1 (582 aa).

Position 7 is a phosphoserine (Ser7). One can recognise a CS domain in the interval 272–360 (KVEPLYYWQQ…NEGLMWPELV (89 aa)). Ser387 is modified (phosphoserine).

It localises to the cytoplasm. The protein resides in the nucleus. This chain is NudC domain-containing protein 1, found in Mus musculus (Mouse).